The chain runs to 82 residues: Cyclin-dependent protein kinase inhibitor SMR5 (82 aa).

The tract at residues 1 to 26 (MEEKNYDDGDTVTVDDDYQMGCTTPT) is disordered. Positions 8–18 (DGDTVTVDDDY) are enriched in acidic residues.

In terms of assembly, interacts with CDKA-1 and D-type cyclins. Expressed in columella cells in the roots and in root meristems after induction.

Probable cyclin-dependent protein kinase (CDK) inhibitor that functions as a repressor of mitosis in the endoreduplication cell cycle. Acts as a potent cell cycle inhibitor, regulating a hydroxyurea-dependent checkpoint in leaves. Essential to activate a high-light-dependent cell cycle checkpoint. The protein is Cyclin-dependent protein kinase inhibitor SMR5 of Arabidopsis thaliana (Mouse-ear cress).